A 232-amino-acid chain; its full sequence is Sugar fermentation stimulation protein homolog (232 aa).

Belongs to the SfsA family.

This Geobacter sulfurreducens (strain ATCC 51573 / DSM 12127 / PCA) protein is Sugar fermentation stimulation protein homolog.